The primary structure comprises 266 residues: UPF0294 protein YafD (266 aa).

It belongs to the UPF0294 family.

The protein resides in the cytoplasm. This is UPF0294 protein YafD from Salmonella typhi.